Here is a 195-residue protein sequence, read N- to C-terminus: Ribonuclease HII (195 aa).

The region spanning 8-195 (WGVVGVDEAG…FAPVRRLLGG (188 aa)) is the RNase H type-2 domain. The a divalent metal cation site is built by aspartate 14, glutamate 15, and aspartate 106.

Belongs to the RNase HII family. It depends on Mn(2+) as a cofactor. Requires Mg(2+) as cofactor.

It localises to the cytoplasm. It carries out the reaction Endonucleolytic cleavage to 5'-phosphomonoester.. Functionally, endonuclease that specifically degrades the RNA of RNA-DNA hybrids. This is Ribonuclease HII from Halorhodospira halophila (strain DSM 244 / SL1) (Ectothiorhodospira halophila (strain DSM 244 / SL1)).